The chain runs to 563 residues: Probable trehalase (563 aa).

Substrate contacts are provided by residues arginine 154, 161 to 162 (WD), asparagine 198, 207 to 209 (RSQ), 274 to 276 (RPE), and glycine 307. Catalysis depends on proton donor/acceptor residues aspartate 309 and glutamate 517. Glutamate 532 is a binding site for substrate.

The protein belongs to the glycosyl hydrolase 37 family.

It carries out the reaction alpha,alpha-trehalose + H2O = alpha-D-glucose + beta-D-glucose. Its function is as follows. Involved in the regulation of trehalose content by hydrolyzing trehalose to glucose. This chain is Probable trehalase, found in Oryza sativa subsp. japonica (Rice).